We begin with the raw amino-acid sequence, 206 residues long: GTP-binding protein YPT1 (206 aa).

Met1 carries the N-acetylmethionine modification. GTP-binding positions include 17–23 (SGVGKSC), 33–40 (YTNDYIST), Gly66, and 121–124 (NKCD). Residue Cys23 is the site of S-palmitoyl cysteine attachment. Positions 37–45 (YISTIGVDF) match the Effector region motif. Residues 63-80 (DTAGQERFRTITSSYYRG) form an interaction with GDI1 region. Cys123 carries S-palmitoyl cysteine lipidation. Residue Lys144 forms a Glycyl lysine isopeptide (Lys-Gly) (interchain with G-Cter in ubiquitin) linkage. 152-153 (AL) contributes to the GTP binding site. Residues Ser172 and Ser174 each carry the phosphoserine modification. Positions 173 to 206 (MSQQNLNETTQKKEDKGNVNLKGQSLTNTGGGCC) are disordered. The interval 189 to 195 (GNVNLKG) is interaction with GDI1. 2 S-geranylgeranyl cysteine lipidation sites follow: Cys205 and Cys206.

Belongs to the small GTPase superfamily. Rab family. As to quaternary structure, forms a complex with the Rab escort protein (REP) MRS6, which is recognized by Rab geranylgeranyltransferase BET2-BET4. Interacts with the Rab GDP dissociation inhibitor GDI1, which can retrieve from and deliver to membranes the GDP-bound and prenylated form of YPT1. Interacts with YIP1, which is required for proper membrane targeting of prenylated YPT1. Interacts with YIF1, YIP3, YIP4 and YIP5. In terms of processing, prenylation is required for interaction with GDI1 and YIP1.

The protein localises to the endoplasmic reticulum membrane. It is found in the golgi apparatus membrane. Its subcellular location is the cytoplasm. The protein resides in the preautophagosomal structure membrane. Its activity is regulated as follows. Rab activation is generally mediated by a guanine exchange factor (GEF), while inactivation through hydrolysis of bound GTP is catalyzed by a GTPase activating protein (GAP). YPT1 is activated by the GEFs DSS4 and TRAPP complex, and inactivated by GAPs GYP1, GYP5 and GYP8. Its function is as follows. The small GTPases Rab are key regulators of intracellular membrane trafficking, from the formation of transport vesicles to their fusion with membranes. Rabs cycle between an inactive GDP-bound form and an active GTP-bound form that is able to recruit to membranes different set of downstream effectors directly responsible for vesicle formation, movement, tethering and fusion. YPT1 regulates the trafficking of secretory vesicles from the endoplasmic reticulum (ER) to the Golgi. Vesicular transport depends on shuttling of YPT1 between membrane and cytosol by GDI1, probably by recycling it to its membrane of origin after a vesicle fusion event. Plays a role in the initial events of the autophagic vacuole development which take place at specialized regions of the endoplasmic reticulum. Also involved in the recycling of membrane proteins. The protein is GTP-binding protein YPT1 (YPT1) of Saccharomyces cerevisiae (strain ATCC 204508 / S288c) (Baker's yeast).